The primary structure comprises 320 residues: Pseudouridine-5'-phosphate glycosidase (320 aa).

E25 (proton donor) is an active-site residue. Substrate-binding residues include K85 and V105. D137 lines the Mn(2+) pocket. 139-141 (SAD) contacts substrate. K158 acts as the Nucleophile in catalysis.

The protein belongs to the pseudouridine-5'-phosphate glycosidase family. Homotrimer. Requires Mn(2+) as cofactor.

The enzyme catalyses D-ribose 5-phosphate + uracil = psi-UMP + H2O. Functionally, catalyzes the reversible cleavage of pseudouridine 5'-phosphate (PsiMP) to ribose 5-phosphate and uracil. Functions biologically in the cleavage direction, as part of a pseudouridine degradation pathway. The protein is Pseudouridine-5'-phosphate glycosidase of Rhodospirillum centenum (strain ATCC 51521 / SW).